The sequence spans 106 residues: Putative double-stranded DNA mimic protein VV1228 (106 aa).

This sequence belongs to the putative dsDNA mimic protein family.

In terms of biological role, may act as a double-stranded DNA (dsDNA) mimic. Probably regulates the activity of a dsDNA-binding protein. The chain is Putative double-stranded DNA mimic protein VV1228 from Vibrio vulnificus (strain YJ016).